Consider the following 365-residue polypeptide: Probable caffeine synthase 2 (365 aa).

Y19 is a binding site for S-adenosyl-L-homocysteine. Residue T26 coordinates caffeine. Positions 62, 99, 100, 134, and 135 each coordinate S-adenosyl-L-homocysteine. The caffeine site is built by Y152, H155, and W156. Mg(2+) is bound at residue N173. Residue R221 coordinates caffeine. Residues D259, F261, and N262 each contribute to the Mg(2+) site. Position 317 (F317) interacts with caffeine.

Belongs to the methyltransferase superfamily. Type-7 methyltransferase family. Requires Mg(2+) as cofactor.

It carries out the reaction 7-methylxanthine + S-adenosyl-L-methionine = theobromine + S-adenosyl-L-homocysteine + H(+). The catalysed reaction is theobromine + S-adenosyl-L-methionine = caffeine + S-adenosyl-L-homocysteine + H(+). It catalyses the reaction 1,7-dimethylxanthine + S-adenosyl-L-methionine = caffeine + S-adenosyl-L-homocysteine + H(+). It participates in alkaloid biosynthesis. Its function is as follows. May be involved in the biosynthesis of caffeine. Catalyzes the conversion of 7-methylxanthine (7mX) to theobromine and of theobromine to caffeine. Has 1-N-methylation activity. The chain is Probable caffeine synthase 2 from Camellia sinensis (Tea plant).